The sequence spans 334 residues: Trans-3-hydroxy-L-proline dehydratase (334 aa).

Cysteine 91 functions as the Proton acceptor in the catalytic mechanism. Residues glycine 92 to histidine 93, aspartate 250, and glycine 255 to threonine 256 contribute to the substrate site.

This sequence belongs to the proline racemase family.

It catalyses the reaction trans-3-hydroxy-L-proline = 1-pyrroline-2-carboxylate + H2O. Catalyzes the dehydration of trans-3-hydroxy-L-proline (t3LHyp) to Delta(1)-pyrroline-2-carboxylate (Pyr2C). Is likely involved in a degradation pathway that converts t3LHyp to L-proline. Can also catalyze the epimerization of trans-4-hydroxy-L-proline (t4LHyp) to cis-4-hydroxy-D-proline (c4DHyp) in vitro. Displays no proline racemase activity. The chain is Trans-3-hydroxy-L-proline dehydratase from Bacillus thuringiensis subsp. konkukian (strain 97-27).